Consider the following 142-residue polypeptide: Large ribosomal subunit protein bL27m (142 aa).

The segment at 27–48 (TKKSAGSTKNGRTSQPKNLGLK) is disordered. Positions 30-43 (SAGSTKNGRTSQPK) are enriched in polar residues.

This sequence belongs to the bacterial ribosomal protein bL27 family.

Its subcellular location is the mitochondrion. This is Large ribosomal subunit protein bL27m (mrpl27) from Dictyostelium discoideum (Social amoeba).